The chain runs to 1084 residues: Probable sucrose-phosphate synthase 1 (1084 aa).

A compositionally biased stretch (gly residues) spans 25–46 (GGGGGGGGGGGGGGGGGGGGGV). Residues 25-61 (GGGGGGGGGGGGGGGGGGGGGVDPRSPAAGAASPRGP) are disordered. A compositionally biased stretch (low complexity) spans 48–61 (PRSPAAGAASPRGP).

This sequence belongs to the glycosyltransferase 1 family. As to quaternary structure, homodimer or homotetramer. As to expression, expressed in leaves mesophyll cells, scutellum of germinating seedlings and pollen of immature inflorescences.

It catalyses the reaction beta-D-fructose 6-phosphate + UDP-alpha-D-glucose = sucrose 6(F)-phosphate + UDP + H(+). It participates in glycan biosynthesis; sucrose biosynthesis; sucrose from D-fructose 6-phosphate and UDP-alpha-D-glucose: step 1/2. Activity is regulated by phosphorylation and moderated by concentration of metabolites and light. Functionally, plays a role in photosynthetic sucrose synthesis by catalyzing the rate-limiting step of sucrose biosynthesis from UDP-glucose and fructose- 6-phosphate. Involved in the regulation of carbon partitioning in the leaves of plants. May regulate the synthesis of sucrose and therefore play a major role as a limiting factor in the export of photoassimilates out of the leaf. Plays a role for sucrose availability that is essential for plant growth and fiber elongation. This Oryza sativa subsp. indica (Rice) protein is Probable sucrose-phosphate synthase 1 (SPS1).